Here is a 125-residue protein sequence, read N- to C-terminus: Small ribosomal subunit protein uS13 (125 aa).

This sequence belongs to the universal ribosomal protein uS13 family. As to quaternary structure, part of the 30S ribosomal subunit. Forms a loose heterodimer with protein S19. Forms two bridges to the 50S subunit in the 70S ribosome.

Located at the top of the head of the 30S subunit, it contacts several helices of the 16S rRNA. In the 70S ribosome it contacts the 23S rRNA (bridge B1a) and protein L5 of the 50S subunit (bridge B1b), connecting the 2 subunits; these bridges are implicated in subunit movement. Contacts the tRNAs in the A and P-sites. This Gluconobacter oxydans (strain 621H) (Gluconobacter suboxydans) protein is Small ribosomal subunit protein uS13.